Here is a 34-residue protein sequence, read N- to C-terminus: Photosystem II reaction center protein M (34 aa).

Residues 5–25 (ILAFIATALFILIPTAFSLIL) form a helical membrane-spanning segment.

It belongs to the PsbM family. PSII is composed of 1 copy each of membrane proteins PsbA, PsbB, PsbC, PsbD, PsbE, PsbF, PsbH, PsbI, PsbJ, PsbK, PsbL, PsbM, PsbT, PsbX, PsbY, PsbZ, Psb30/Ycf12, at least 3 peripheral proteins of the oxygen-evolving complex and a large number of cofactors. It forms dimeric complexes.

Its subcellular location is the plastid. The protein resides in the chloroplast thylakoid membrane. In terms of biological role, one of the components of the core complex of photosystem II (PSII). PSII is a light-driven water:plastoquinone oxidoreductase that uses light energy to abstract electrons from H(2)O, generating O(2) and a proton gradient subsequently used for ATP formation. It consists of a core antenna complex that captures photons, and an electron transfer chain that converts photonic excitation into a charge separation. This subunit is found at the monomer-monomer interface. In Huperzia lucidula (Shining clubmoss), this protein is Photosystem II reaction center protein M.